Here is a 233-residue protein sequence, read N- to C-terminus: 2-C-methyl-D-erythritol 4-phosphate cytidylyltransferase (233 aa).

It belongs to the IspD/TarI cytidylyltransferase family. IspD subfamily.

It carries out the reaction 2-C-methyl-D-erythritol 4-phosphate + CTP + H(+) = 4-CDP-2-C-methyl-D-erythritol + diphosphate. The protein operates within isoprenoid biosynthesis; isopentenyl diphosphate biosynthesis via DXP pathway; isopentenyl diphosphate from 1-deoxy-D-xylulose 5-phosphate: step 2/6. In terms of biological role, catalyzes the formation of 4-diphosphocytidyl-2-C-methyl-D-erythritol from CTP and 2-C-methyl-D-erythritol 4-phosphate (MEP). This Gloeobacter violaceus (strain ATCC 29082 / PCC 7421) protein is 2-C-methyl-D-erythritol 4-phosphate cytidylyltransferase.